Here is a 276-residue protein sequence, read N- to C-terminus: Phosphonoacetaldehyde hydrolase (276 aa).

Asp19 serves as the catalytic Nucleophile. Residues Asp19 and Ala21 each coordinate Mg(2+). Lys60 serves as the catalytic Schiff-base intermediate with substrate. Residue Asp193 coordinates Mg(2+).

This sequence belongs to the HAD-like hydrolase superfamily. PhnX family. Homodimer. Requires Mg(2+) as cofactor.

The catalysed reaction is phosphonoacetaldehyde + H2O = acetaldehyde + phosphate + H(+). Functionally, involved in phosphonate degradation. This is Phosphonoacetaldehyde hydrolase from Bordetella bronchiseptica (strain ATCC BAA-588 / NCTC 13252 / RB50) (Alcaligenes bronchisepticus).